The sequence spans 173 residues: C-phycocyanin-2 beta subunit (173 aa).

Asparagine 73 carries the N4-methylasparagine modification. (2R,3E)-phycocyanobilin-binding residues include cysteine 83 and cysteine 154.

This sequence belongs to the phycobiliprotein family. In terms of assembly, heterodimer of an alpha and a beta subunit, which further assembles into trimers and the trimers into hexamers. Contains two covalently linked bilin chromophores.

The protein resides in the cellular thylakoid membrane. In terms of biological role, light-harvesting photosynthetic bile pigment-protein from the phycobiliprotein complex (phycobilisome, PBS). Phycocyanin is the major phycobiliprotein in the PBS rod. In Synechococcus sp. (strain ATCC 27144 / PCC 6301 / SAUG 1402/1) (Anacystis nidulans), this protein is C-phycocyanin-2 beta subunit (cpcB2).